The chain runs to 227 residues: MTNNLSGYRNKFVRVKTSKKRTVSSSNWLRRQLNDPYVAKARMDGFRSRAAYKLLEIHEKFKLFTPNMKIVDLGAAPGGWSQVASKLIKASDNNLNNKIISIDVLEIEHVAGVEFVQKDFFEADTEELIIQALDGRADIVMSDMASNTIGHKATDHIRTLLLCEQAFEFALKVLKPSGHFIAKIFRGGAENELLYKVKREFKTVKHFKPSSSRSESTEIYLVALNKK.

S-adenosyl-L-methionine-binding residues include glycine 78, tryptophan 80, aspartate 103, aspartate 119, and aspartate 143. Residue lysine 183 is the Proton acceptor of the active site.

This sequence belongs to the class I-like SAM-binding methyltransferase superfamily. RNA methyltransferase RlmE family.

The protein resides in the cytoplasm. The enzyme catalyses uridine(2552) in 23S rRNA + S-adenosyl-L-methionine = 2'-O-methyluridine(2552) in 23S rRNA + S-adenosyl-L-homocysteine + H(+). In terms of biological role, specifically methylates the uridine in position 2552 of 23S rRNA at the 2'-O position of the ribose in the fully assembled 50S ribosomal subunit. The sequence is that of Ribosomal RNA large subunit methyltransferase E from Rickettsia africae (strain ESF-5).